The primary structure comprises 1273 residues: DNA-directed RNA polymerase subunit beta (1273 aa).

The protein belongs to the RNA polymerase beta chain family. As to quaternary structure, the RNAP catalytic core consists of 2 alpha, 1 beta, 1 beta' and 1 omega subunit. When a sigma factor is associated with the core the holoenzyme is formed, which can initiate transcription.

The enzyme catalyses RNA(n) + a ribonucleoside 5'-triphosphate = RNA(n+1) + diphosphate. DNA-dependent RNA polymerase catalyzes the transcription of DNA into RNA using the four ribonucleoside triphosphates as substrates. This is DNA-directed RNA polymerase subunit beta from Onion yellows phytoplasma (strain OY-M).